Here is a 416-residue protein sequence, read N- to C-terminus: CinA-like protein (416 aa).

It belongs to the CinA family.

This is CinA-like protein from Synechocystis sp. (strain ATCC 27184 / PCC 6803 / Kazusa).